A 240-amino-acid chain; its full sequence is Probable Ni/Fe-hydrogenase B-type cytochrome subunit (240 aa).

Helical transmembrane passes span 31–51 (LWHWVTALSIVVLGVTGYFIG), 75–95 (FAAGYVLAIGFLGRVYWAFVG), 142–163 (LAMFCFFVVGAVFMSVTGFALY), and 196–213 (LGMWYLVVFVMVHVYLAV).

This sequence belongs to the HupC/HyaC/HydC family.

The protein localises to the cell membrane. In terms of biological role, probable b-type cytochrome. The sequence is that of Probable Ni/Fe-hydrogenase B-type cytochrome subunit (hoxZ) from Azotobacter vinelandii.